A 326-amino-acid chain; its full sequence is (+)-T-muurolol synthase ((2E,6E)-farnesyl diphosphate cyclizing) (326 aa).

Mg(2+) is bound by residues D81 and D85. The DDXXD motif motif lies at 81-85 (DDQCD). R175 contacts substrate. Mg(2+) is bound by residues N221 and S225. A substrate-binding site is contributed by K228. E229 is a binding site for Mg(2+). Substrate is bound at residue 309-310 (RY).

It belongs to the terpene synthase family. Requires Mg(2+) as cofactor.

It catalyses the reaction (2E,6E)-farnesyl diphosphate + H2O = (+)-T-muurolol + diphosphate. Its pathway is secondary metabolite biosynthesis; terpenoid biosynthesis. Catalyzes the conversion of (2E,6E)-farnesyl diphosphate (FPP) into (+)-T-muurolol via a 1,10-cyclization, which requires isomerization of FPP to nerolidyl diphosphate (NPP) and then abstraction of the pyrophosphate from intermediate NPP leading to a (E,Z)-germacradienyl (helminthogermacradienyl) cation. The chain is (+)-T-muurolol synthase ((2E,6E)-farnesyl diphosphate cyclizing) from Roseiflexus castenholzii (strain DSM 13941 / HLO8).